The primary structure comprises 280 residues: Energy-coupling factor transporter ATP-binding protein EcfA1 (280 aa).

An ABC transporter domain is found at 6–241 (LRIENISFQY…SHMLQEIGLD (236 aa)). 40–47 (GQNGSGKS) contributes to the ATP binding site.

The protein belongs to the ABC transporter superfamily. Energy-coupling factor EcfA family. Forms a stable energy-coupling factor (ECF) transporter complex composed of 2 membrane-embedded substrate-binding proteins (S component), 2 ATP-binding proteins (A component) and 2 transmembrane proteins (T component).

The protein resides in the cell membrane. ATP-binding (A) component of a common energy-coupling factor (ECF) ABC-transporter complex. Unlike classic ABC transporters this ECF transporter provides the energy necessary to transport a number of different substrates. This chain is Energy-coupling factor transporter ATP-binding protein EcfA1, found in Bacillus cereus (strain ATCC 14579 / DSM 31 / CCUG 7414 / JCM 2152 / NBRC 15305 / NCIMB 9373 / NCTC 2599 / NRRL B-3711).